The following is a 446-amino-acid chain: Argininosuccinate lyase (446 aa).

It belongs to the lyase 1 family. Argininosuccinate lyase subfamily.

It is found in the cytoplasm. The enzyme catalyses 2-(N(omega)-L-arginino)succinate = fumarate + L-arginine. The protein operates within amino-acid biosynthesis; L-arginine biosynthesis; L-arginine from L-ornithine and carbamoyl phosphate: step 3/3. This is Argininosuccinate lyase from Sulfurisphaera tokodaii (strain DSM 16993 / JCM 10545 / NBRC 100140 / 7) (Sulfolobus tokodaii).